The following is a 40-amino-acid chain: Biotin carboxylase (40 aa).

Residues 1-40 form the Biotin carboxylation domain; that stretch reads ILVANRGEIAVRLLEEAPSPALTPELRITAYLPSGGPFVR. Positions 13–27 constitute an ATP-grasp domain; sequence LLEEAPSPALTPELR.

As to quaternary structure, acetyl-CoA carboxylase is a heterohexamer of biotin carboxyl carrier protein, biotin carboxylase and the two subunits of carboxyl transferase in a 2:2 complex. Mg(2+) serves as cofactor. Requires Mn(2+) as cofactor.

It catalyses the reaction N(6)-biotinyl-L-lysyl-[protein] + hydrogencarbonate + ATP = N(6)-carboxybiotinyl-L-lysyl-[protein] + ADP + phosphate + H(+). Its pathway is lipid metabolism; malonyl-CoA biosynthesis; malonyl-CoA from acetyl-CoA: step 1/1. In terms of biological role, this protein is a component of the acetyl coenzyme A carboxylase complex; first, biotin carboxylase catalyzes the carboxylation of the carrier protein and then the transcarboxylase transfers the carboxyl group to form malonyl-CoA. The chain is Biotin carboxylase from Populus euphratica (Euphrates poplar).